We begin with the raw amino-acid sequence, 227 residues long: Charged multivesicular body protein 4b (227 aa).

2 disordered regions span residues 1–26 and 186–227; these read MSGI…SPQE and SGPE…AGNM. The segment covering 9–20 has biased composition (gly residues); that stretch reads FGAGAGGKGAGK. The stretch at 25–185 forms a coiled coil; that stretch reads QEAIQRLRDT…EELDKNLLEI (161 aa).

This sequence belongs to the SNF7 family. As to quaternary structure, probable core component of the endosomal sorting required for transport complex III (ESCRT-III). ESCRT-III components are thought to multimerize to form a flat lattice on the perimeter membrane of the endosome.

The protein localises to the cytoplasm. Its subcellular location is the cytosol. It localises to the late endosome membrane. It is found in the midbody. Its function is as follows. Probable core component of the endosomal sorting required for transport complex III (ESCRT-III) which is involved in multivesicular bodies (MVBs) formation and sorting of endosomal cargo proteins into MVBs. MVBs contain intraluminal vesicles (ILVs) that are generated by invagination and scission from the limiting membrane of the endosome and mostly are delivered to lysosomes enabling degradation of membrane proteins, such as stimulated growth factor receptors, lysosomal enzymes and lipids. In Gallus gallus (Chicken), this protein is Charged multivesicular body protein 4b (CHMP4B).